The chain runs to 317 residues: Lysosomal-associated transmembrane protein 4B (317 aa).

Residues 25–73 form a disordered region; that stretch reads AFGAKGTDPAEARSSRGIEEAGPRAHGRAGREPERRRSRQQRRGGLQAR. A compositionally biased stretch (basic and acidic residues) spans 32–59; that stretch reads DPAEARSSRGIEEAGPRAHGRAGREPER. Helical transmembrane passes span 117–137, 163–183, 191–211, and 244–264; these read ILLGVWYLIINAVVLLILLSA, MCIAIAISLLMILICAMATYG, WIIPFFCYQIFDFALNMLVAI, and CLVLIILLFISIILTFKGYLI. Positions 205–221 are required for NEDD4 interaction; sequence LNMLVAITVLIYPNSIQ.

It belongs to the LAPTM4/LAPTM5 transporter family. In terms of assembly, homooligomer; upon reaching the lysosomes. Interacts with MCOLN1. Interacts with NEDD4; may play a role in the lysosomal sorting of LAPTM4B; enhances HGS association with NEDD4; mediates inhibition of EGFR degradation. Interacts with PIP5K1C; promotes SNX5 association with LAPTM4B; kinase activity of PIP5K1C is required; interaction is regulated by phosphatidylinositol 4,5-bisphosphate generated by PIP5K1C. Interacts with HGS; promotes HGS ubiquitination. Interacts with SNX5. Interacts with SLC3A2 and SLC7A5; recruits SLC3A2 and SLC7A5 to lysosomes to promote leucine uptake into these organelles and is required for mTORC1 activation. Interacts with LRRC32; decreases TGFB1 production in regulatory T cells. Interacts with BECN1; competes with EGFR for LAPTM4B binding; regulates EGFR activity. Interacts with EGFR; positively correlates with EGFR activation. In terms of processing, undergoes proteolytic cleavage following delivery to the lysosomes. Post-translationally, ubiquitinated by NEDD4.

The protein resides in the endomembrane system. It localises to the late endosome membrane. Its subcellular location is the cell membrane. It is found in the cell projection. The protein localises to the lysosome membrane. The protein resides in the endosome membrane. It localises to the endosome. Its subcellular location is the multivesicular body membrane. It is found in the multivesicular body lumen. Its function is as follows. Required for optimal lysosomal function. Blocks EGF-stimulated EGFR intraluminal sorting and degradation. Conversely by binding with the phosphatidylinositol 4,5-bisphosphate, regulates its PIP5K1C interaction, inhibits HGS ubiquitination and relieves LAPTM4B inhibition of EGFR degradation. Recruits SLC3A2 and SLC7A5 (the Leu transporter) to the lysosome, promoting entry of leucine and other essential amino acid (EAA) into the lysosome, stimulating activation of proton-transporting vacuolar (V)-ATPase protein pump (V-ATPase) and hence mTORC1 activation. Plays a role as negative regulator of TGFB1 production in regulatory T cells. Binds ceramide and facilitates its exit from late endosome in order to control cell death pathways. This chain is Lysosomal-associated transmembrane protein 4B, found in Homo sapiens (Human).